We begin with the raw amino-acid sequence, 328 residues long: Cell cycle control protein 50A (328 aa).

The segment at 1–28 is disordered; that stretch reads MAMNYSAKDEVDGGPTGPPGGAAKTRRP. N-acetylalanine is present on A2. Positions 2 to 48 are required for ATPase and aminophospholipid flippase activity; sequence AMNYSAKDEVDGGPTGPPGGAAKTRRPDNTAFKQQRLPAWQPILTAG. The Cytoplasmic segment spans residues 2 to 49; it reads AMNYSAKDEVDGGPTGPPGGAAKTRRPDNTAFKQQRLPAWQPILTAGT. The segment at 49–315 is interaction with ATP8A2; sequence TVLPTFFIIG…LGVVLLVINH (267 aa). The chain crosses the membrane as a helical span at residues 50–70; the sequence is VLPTFFIIGLIFIPIGIGIFV. Residues 71–292 are Exoplasmic loop-facing; that stretch reads TSNNIREIEG…SWMGGKNPFL (222 aa). Residues 102 to 125 form a disordered region; the sequence is RDDSQLNGDPSALLNPSKECEPYR. C121 and C135 are oxidised to a cystine. N144 and N261 each carry an N-linked (GlcNAc...) asparagine glycan. A helical membrane pass occupies residues 293 to 313; sequence GIAYITIGSISFLLGVVLLVI. Topologically, residues 314 to 328 are cytoplasmic; it reads NHKYRNSSNTADITI.

This sequence belongs to the CDC50/LEM3 family. As to quaternary structure, component of various P4-ATPase flippase complexes which consists of a catalytic alpha subunit and an accessory beta subunit. Interacts with ATP8A1 to form a flippase complex; this complex forms an intermediate phosphoenzyme. Interacts with ATP8A2 to form a flippase complex. TP8B1:TMEM30A and ATP8B2:TMEM30A flippase complexes have been shown to form intermediate phosphoenzymes in vitro. Interacts with alpha subunits ATP8A1, ATP8B1, ATP8B2, ATP8B4, ATP10A, ATP10B, ATP10D, ATP11A, ATP11B and ATP11C. In terms of processing, N-glycosylated. Contains high mannose-type oligosaccharides.

It localises to the membrane. It is found in the golgi apparatus. The protein resides in the cytoplasmic vesicle. The protein localises to the secretory vesicle membrane. Its subcellular location is the apical cell membrane. It localises to the photoreceptor inner segment. It is found in the cell projection. The protein resides in the cilium. The protein localises to the photoreceptor outer segment. In terms of biological role, accessory component of a P4-ATPase flippase complex which catalyzes the hydrolysis of ATP coupled to the transport of aminophospholipids from the outer to the inner leaflet of various membranes and ensures the maintenance of asymmetric distribution of phospholipids. Phospholipid translocation also seems to be implicated in vesicle formation and in uptake of lipid signaling molecules. The beta subunit may assist in binding of the phospholipid substrate. Required for the proper folding, assembly and ER to Golgi exit of the ATP8A2:TMEM30A flippase complex. ATP8A2:TMEM30A may be involved in regulation of neurite outgrowth, and, reconstituted to liposomes, predomiminantly transports phosphatidylserine (PS) and to a lesser extent phosphatidylethanolamine (PE). The ATP8A1:TMEM30A flippase complex seems to play a role in regulation of cell migration probably involving flippase-mediated translocation of phosphatidylethanolamine (PE) at the plasma membrane. Required for the formation of the ATP8A2, ATP8B1 and ATP8B2 P-type ATPAse intermediate phosphoenzymes. Involved in uptake of platelet-activating factor (PAF). Can also mediate the export of alpha subunits ATP8A1, ATP8B1, ATP8B2, ATP8B4, ATP10A, ATP10B, ATP10D, ATP11A, ATP11B and ATP11C from ER to other membrane localizations. The sequence is that of Cell cycle control protein 50A from Rattus norvegicus (Rat).